The sequence spans 198 residues: Ribosome maturation factor RimP (198 aa).

The protein belongs to the RimP family.

It is found in the cytoplasm. In terms of biological role, required for maturation of 30S ribosomal subunits. This chain is Ribosome maturation factor RimP, found in Agrobacterium fabrum (strain C58 / ATCC 33970) (Agrobacterium tumefaciens (strain C58)).